A 156-amino-acid polypeptide reads, in one-letter code: MNLNATLIAQFVVFFILAGFTMKFVWPPLMNALDERAKKIADGLAAAERGKSDLAAAEKRAQAELTSAQEAGQKRIGDAEKRGQSIIDEAKKTAAEEAARIIATAKADADQQVTQVREALRDQVATLAVKGAEQILKREVNAAVHADLLNQLKAEL.

A helical membrane pass occupies residues 7 to 27 (LIAQFVVFFILAGFTMKFVWP).

It belongs to the ATPase B chain family. As to quaternary structure, F-type ATPases have 2 components, F(1) - the catalytic core - and F(0) - the membrane proton channel. F(1) has five subunits: alpha(3), beta(3), gamma(1), delta(1), epsilon(1). F(0) has three main subunits: a(1), b(2) and c(10-14). The alpha and beta chains form an alternating ring which encloses part of the gamma chain. F(1) is attached to F(0) by a central stalk formed by the gamma and epsilon chains, while a peripheral stalk is formed by the delta and b chains.

It is found in the cell inner membrane. Functionally, f(1)F(0) ATP synthase produces ATP from ADP in the presence of a proton or sodium gradient. F-type ATPases consist of two structural domains, F(1) containing the extramembraneous catalytic core and F(0) containing the membrane proton channel, linked together by a central stalk and a peripheral stalk. During catalysis, ATP synthesis in the catalytic domain of F(1) is coupled via a rotary mechanism of the central stalk subunits to proton translocation. In terms of biological role, component of the F(0) channel, it forms part of the peripheral stalk, linking F(1) to F(0). This is ATP synthase subunit b from Herminiimonas arsenicoxydans.